Reading from the N-terminus, the 363-residue chain is DNA replication and repair protein RecF (363 aa).

30 to 37 (GPNGSGKT) is a binding site for ATP.

This sequence belongs to the RecF family.

The protein resides in the cytoplasm. Functionally, the RecF protein is involved in DNA metabolism; it is required for DNA replication and normal SOS inducibility. RecF binds preferentially to single-stranded, linear DNA. It also seems to bind ATP. The chain is DNA replication and repair protein RecF from Chlorobium limicola (strain DSM 245 / NBRC 103803 / 6330).